Consider the following 73-residue polypeptide: RNA-binding protein Hfq (73 aa).

Residues 8-68 (DQFLNQIRKE…ISTFAPQKNV (61 aa)) enclose the Sm domain.

This sequence belongs to the Hfq family. As to quaternary structure, homohexamer.

RNA chaperone that binds small regulatory RNA (sRNAs) and mRNAs to facilitate mRNA translational regulation in response to envelope stress, environmental stress and changes in metabolite concentrations. Also binds with high specificity to tRNAs. The chain is RNA-binding protein Hfq from Bacillus licheniformis (strain ATCC 14580 / DSM 13 / JCM 2505 / CCUG 7422 / NBRC 12200 / NCIMB 9375 / NCTC 10341 / NRRL NRS-1264 / Gibson 46).